The primary structure comprises 1017 residues: Probable disease resistance protein RDL5 (1017 aa).

Residues 25–52 (QGVEDQVTELKRDLNMLSSFLKDANAKK) are a coiled coil. Residues 147 to 460 (KQREMRQKFS…AEGIFQPRHY (314 aa)) enclose the NB-ARC domain. 190–197 (GMGGLGKT) is a binding site for ATP. LRR repeat units lie at residues 602-627 (LIHL…NLKL), 649-674 (MQEL…NLVK), 675-699 (LETL…RLST), 768-791 (PSHL…ILEK), 792-819 (LLQL…GFPQ), 841-865 (MPLL…HLPS), and 937-962 (MPFL…QFIY).

Belongs to the disease resistance NB-LRR family.

In terms of biological role, potential disease resistance protein. This Arabidopsis thaliana (Mouse-ear cress) protein is Probable disease resistance protein RDL5 (RDL5).